Reading from the N-terminus, the 543-residue chain is MTNRRYESVQSYLFNNRNNKIDAHQFFERVDTAEAQIIKNNIYDNTVVLNRDVLLNILKLANDVFDNKAYMYVDDSEVSRHYNAVVKMKRLVIGVRDPSLRQSLYNTIAYIERLLNIGTVNDSEITMLIADFYDLYSNYNIELPPPQALPRSRRPSVVQPAAPAPVPTIVREQTKPEQIIPAAPPPPPSPVPNIPAPPPPPPPSMSELPPAPPMPTEPQPAAPLDDRQQLLEAIRNEKNRTRLRPVKPKTAPETSTIVEVPTVLPKETFEPKPPSASPPPPPPPPPPPAPPAPPPMVDLSSAPPPPPLVDLPSEMLPPPAPSLSNVLSELKSGTVRLKPAQKRPQSEIIPKSSTTNLIADVLADTINRRRVAMAKSSSEATSNDEGWDDDDNRPNKANTPDVKYVQALFNVFTSSQLYTNDSDERNTKAHNILNDVEPLLQNKTQTNIDKARLLLQDLASFVALSENPLDSPAIGSEKQPLFETNRNLFYKSIEDLIFKFRYKDAENHLIFALTYHPKDYKFNELLKYVQQLSVNQQRTESSA.

Disordered regions lie at residues 147–222 (QALP…QPAA), 235–325 (RNEK…SLSN), and 373–400 (MAKS…ANTP). Residues 182 to 221 (AAPPPPPSPVPNIPAPPPPPPPSMSELPPAPPMPTEPQPA) show a composition bias toward pro residues. In terms of domain architecture, WH2 spans 226-246 (DRQQLLEAIRNEKNRTRLRPV). Pro residues predominate over residues 271–321 (PKPPSASPPPPPPPPPPPAPPAPPPMVDLSSAPPPPPLVDLPSEMLPPPAP). The span at 375-384 (KSSSEATSND) shows a compositional bias: polar residues.

Forms a complex with proteins C42 and E27. Interacts with host actin-related protein 2/3 complex. Interacts with protein Ac102.

It localises to the host cytoplasm. The protein localises to the host nucleus. Functionally, plays a role in the transport of the nucleocapsids from the cytoplasm toward the host nucleus together with the host actin-polymerizing Arp2/3 complex. This chain is Protein P78/83 (P61), found in Lepidoptera (butterflies and moths).